We begin with the raw amino-acid sequence, 161 residues long: NADH-quinone oxidoreductase subunit I (161 aa).

4Fe-4S ferredoxin-type domains lie at 52–82 and 92–121; these read LRRYPNGEERCIACKLCEAVCPALAITIESE and KRYDIDLTKCIFCGFCEEACPVDAVVETRV. Residues C62, C65, C68, C72, C101, C104, C107, and C111 each coordinate [4Fe-4S] cluster.

This sequence belongs to the complex I 23 kDa subunit family. NDH-1 is composed of 14 different subunits. Subunits NuoA, H, J, K, L, M, N constitute the membrane sector of the complex. It depends on [4Fe-4S] cluster as a cofactor.

The protein localises to the cell inner membrane. It carries out the reaction a quinone + NADH + 5 H(+)(in) = a quinol + NAD(+) + 4 H(+)(out). NDH-1 shuttles electrons from NADH, via FMN and iron-sulfur (Fe-S) centers, to quinones in the respiratory chain. The immediate electron acceptor for the enzyme in this species is believed to be ubiquinone. Couples the redox reaction to proton translocation (for every two electrons transferred, four hydrogen ions are translocated across the cytoplasmic membrane), and thus conserves the redox energy in a proton gradient. This chain is NADH-quinone oxidoreductase subunit I, found in Aromatoleum aromaticum (strain DSM 19018 / LMG 30748 / EbN1) (Azoarcus sp. (strain EbN1)).